Reading from the N-terminus, the 384-residue chain is S-adenosylmethionine synthase (384 aa).

His-15 provides a ligand contact to ATP. Asp-17 contributes to the Mg(2+) binding site. Glu-43 provides a ligand contact to K(+). Residues Glu-56 and Gln-99 each contribute to the L-methionine site. The tract at residues 99-109 (QSADINQGVDR) is flexible loop. ATP is bound by residues 164–166 (DAK), 230–231 (RF), Asp-239, 245–246 (RK), Ala-262, and Lys-266. An L-methionine-binding site is contributed by Asp-239. Lys-270 contributes to the L-methionine binding site.

Belongs to the AdoMet synthase family. As to quaternary structure, homotetramer; dimer of dimers. Mg(2+) is required as a cofactor. Requires K(+) as cofactor.

It localises to the cytoplasm. It carries out the reaction L-methionine + ATP + H2O = S-adenosyl-L-methionine + phosphate + diphosphate. The protein operates within amino-acid biosynthesis; S-adenosyl-L-methionine biosynthesis; S-adenosyl-L-methionine from L-methionine: step 1/1. Catalyzes the formation of S-adenosylmethionine (AdoMet) from methionine and ATP. The overall synthetic reaction is composed of two sequential steps, AdoMet formation and the subsequent tripolyphosphate hydrolysis which occurs prior to release of AdoMet from the enzyme. The chain is S-adenosylmethionine synthase from Haemophilus influenzae (strain 86-028NP).